The sequence spans 530 residues: Protein P80 (530 aa).

The signal sequence occupies residues 1 to 22 (MKVISGLLFFILISCSLFLVQG). The helical transmembrane segment at 491–511 (MLVAMTFNVALFFAVIAGVLV) threads the bilayer.

Belongs to the SLC31A transporter family.

The protein resides in the late endosome membrane. The polypeptide is Protein P80 (p80) (Dictyostelium discoideum (Social amoeba)).